A 329-amino-acid polypeptide reads, in one-letter code: GTP 3',8-cyclase (329 aa).

Positions 8–234 constitute a Radical SAM core domain; that stretch reads AFARKFYYLR…QLRQRSDGPA (227 aa). Position 17 (Arg-17) interacts with GTP. Residues Cys-24 and Cys-28 each contribute to the [4Fe-4S] cluster site. Tyr-30 contributes to the S-adenosyl-L-methionine binding site. Cys-31 is a [4Fe-4S] cluster binding site. A GTP-binding site is contributed by Arg-68. Gly-72 contacts S-adenosyl-L-methionine. A GTP-binding site is contributed by Thr-99. Ser-123 provides a ligand contact to S-adenosyl-L-methionine. Residue Lys-160 coordinates GTP. An S-adenosyl-L-methionine-binding site is contributed by Met-194. Residues Cys-257 and Cys-260 each coordinate [4Fe-4S] cluster. 262–264 lines the GTP pocket; that stretch reads RLR. Residue Cys-274 coordinates [4Fe-4S] cluster.

The protein belongs to the radical SAM superfamily. MoaA family. Monomer and homodimer. The cofactor is [4Fe-4S] cluster.

The enzyme catalyses GTP + AH2 + S-adenosyl-L-methionine = (8S)-3',8-cyclo-7,8-dihydroguanosine 5'-triphosphate + 5'-deoxyadenosine + L-methionine + A + H(+). Its pathway is cofactor biosynthesis; molybdopterin biosynthesis. Its function is as follows. Catalyzes the cyclization of GTP to (8S)-3',8-cyclo-7,8-dihydroguanosine 5'-triphosphate. This Escherichia fergusonii (strain ATCC 35469 / DSM 13698 / CCUG 18766 / IAM 14443 / JCM 21226 / LMG 7866 / NBRC 102419 / NCTC 12128 / CDC 0568-73) protein is GTP 3',8-cyclase.